The primary structure comprises 230 residues: Probable phosphatase IndB (230 aa).

D8 functions as the Nucleophile in the catalytic mechanism. Residues D8, D10, and D169 each coordinate Mg(2+). D10 functions as the Proton donor in the catalytic mechanism.

This sequence belongs to the HAD-like hydrolase superfamily. The cofactor is Mg(2+).

Its function is as follows. Part of an operon that could be involved in the biosynthesis of the blue pigment indigoidine, which is implicated in pathogenicity and protection from oxidative stress. The sequence is that of Probable phosphatase IndB from Dickeya dadantii (strain 3937) (Erwinia chrysanthemi (strain 3937)).